A 141-amino-acid chain; its full sequence is Envelope protein A28 homolog (141 aa).

A helical; Signal-anchor for type II membrane protein membrane pass occupies residues 1 to 21 (MDPLSVFFLVVAAAAVCTLLL). The Virion surface portion of the chain corresponds to 22-140 (QAYAVYENFD…AEDCAFLKSV (119 aa)).

The protein belongs to the poxviridae A28 protein family. Contains two intramolecular disulfide bonds. They are created by the viral disulfide bond formation pathway, a poxvirus-specific pathway that operates on the cytoplasmic side of the MV membranes.

It localises to the virion membrane. Envelope protein required for virus entry into host cell and for cell-cell fusion (syncytium formation). The polypeptide is Envelope protein A28 homolog (Molluscum contagiosum virus subtype 1 (MOCV)).